The sequence spans 215 residues: Sodium channel regulatory subunit beta-3 (215 aa).

The N-terminal stretch at 1-22 is a signal peptide; that stretch reads MPAFNRLFPLVSLVLIYWASVC. The Extracellular segment spans residues 23-156; it reads FPVCVEVPSE…EEAGEDFTSV (134 aa). One can recognise an Ig-like C2-type domain in the interval 24 to 138; that stretch reads PVCVEVPSET…EAHRPFVKTT (115 aa). Cystine bridges form between Cys-26–Cys-48 and Cys-45–Cys-120. N-linked (GlcNAc...) asparagine glycosylation is found at Asn-95, Asn-109, Asn-113, and Asn-121. Residues 157–178 form a helical membrane-spanning segment; the sequence is VSEIMMYILLVFLTLWLLIEMI. Residues 179–215 are Cytoplasmic-facing; the sequence is YCYRKVSKAEEAAQENASDYLAIPSENKENSAVPVEE.

Belongs to the sodium channel auxiliary subunit SCN3B (TC 8.A.17) family. A voltage-gated sodium (Nav) channel consists of an ion-conducting pore-forming alpha subunit functional on its own that is regulated by one or more beta subunits. Forms homodimers and homotrimers. SCN3B is non-covalently associated with alpha subunits and induces the formation of alpha subunit oligomers, including trimers. Interacts with SCN5A/Nav1.5; regulatory subunit of SCN5A/Nav1.5. Interacts with SCN7A/Nav2.1; probable regulatory subunit of SCN7A/Nav2.1. Interacts with SCN10A; regulatory subunit of SCN10A/Nav1.8. Interacts with NFASC; probably involved in targeting the sodium channels to the nodes of Ranvier. Post-translationally, intramolecular disulfide bonds favor the voltage-gated sodium channel oligomeric complex assembly. N-glycosylated.

The protein localises to the cell membrane. Functionally, regulatory subunit of multiple voltage-gated sodium (Nav) channels directly mediating the depolarization of excitable membranes. Navs, also called VGSCs (voltage-gated sodium channels) or VDSCs (voltage-dependent sodium channels), operate by switching between closed and open conformations depending on the voltage difference across the membrane. In the open conformation they allow Na(+) ions to selectively pass through the pore, along their electrochemical gradient. The influx of Na+ ions provokes membrane depolarization, initiating the propagation of electrical signals throughout cells and tissues. The accessory beta subunits participate in localization and functional modulation of the Nav channels. Modulates the activity of SCN2A/Nav1.2, causing a hyperpolarizing shift in the voltage-dependence of inactivation of the channel and increasing the fraction of channels operating in the fast gating mode. Modulates the activity of SCN5A/Nav1.5. Could also regulate the atypical sodium channel SCN7A/Nav2.1. Modulates the activity of SCN10A/Nav1.8, regulating its oligomerization and accelerating the recovery from inactivation. The protein is Sodium channel regulatory subunit beta-3 of Macaca fascicularis (Crab-eating macaque).